The following is a 513-amino-acid chain: Alanine--glyoxylate aminotransferase 2, mitochondrial (513 aa).

A mitochondrion-targeting transit peptide spans 1 to 40 (MSLAWRNLQKPFYLETSLRILQMRPSLSLGASRIAVPKLT). Position 56 is an N6-acetyllysine (lysine 56). Lysine 70 bears the N6-acetyllysine; alternate mark. Lysine 70 bears the N6-succinyllysine; alternate mark. The residue at position 83 (lysine 83) is an N6-acetyllysine. Residue lysine 261 is modified to N6-acetyllysine; alternate. At lysine 261 the chain carries N6-succinyllysine; alternate. An N6-succinyllysine modification is found at lysine 303. Lysine 349 bears the N6-(pyridoxal phosphate)lysine mark. N6-acetyllysine; alternate occurs at positions 416 and 419. Residues lysine 416 and lysine 419 each carry the N6-succinyllysine; alternate modification. Lysine 453 carries the post-translational modification N6-acetyllysine.

It belongs to the class-III pyridoxal-phosphate-dependent aminotransferase family. As to quaternary structure, homotetramer. Pyridoxal 5'-phosphate is required as a cofactor. In terms of tissue distribution, expressed in the liver and kidney.

It is found in the mitochondrion. The enzyme catalyses glyoxylate + L-alanine = glycine + pyruvate. It carries out the reaction (R)-3-amino-2-methylpropanoate + pyruvate = 2-methyl-3-oxopropanoate + L-alanine. The catalysed reaction is 3-oxopropanoate + L-alanine = beta-alanine + pyruvate. It catalyses the reaction 2-oxobutanoate + L-alanine = (2S)-2-aminobutanoate + pyruvate. The enzyme catalyses N(omega),N(omega)-dimethyl-L-arginine + pyruvate = 5-(3,3-dimethylguanidino)-2-oxopentanoate + L-alanine. It carries out the reaction N(omega),N('omega)-dimethyl-L-arginine + pyruvate = 5-(3,3'-dimethylguanidino)-2-oxopentanoate + L-alanine. The catalysed reaction is N(omega),N(omega)-dimethyl-L-arginine + glyoxylate = 5-(3,3-dimethylguanidino)-2-oxopentanoate + glycine. It catalyses the reaction N(omega),N('omega)-dimethyl-L-arginine + glyoxylate = 5-(3,3'-dimethylguanidino)-2-oxopentanoate + glycine. The enzyme catalyses N(omega)-methyl-L-arginine + pyruvate = 5-(3-methylguanidino)-2-oxopentanoate + L-alanine. It carries out the reaction N(omega)-methyl-L-arginine + glyoxylate = 5-(3-methylguanidino)-2-oxopentanoate + glycine. The catalysed reaction is L-ornithine + pyruvate = 5-amino-2-oxopentanoate + L-alanine. It catalyses the reaction L-ornithine + glyoxylate = 5-amino-2-oxopentanoate + glycine. The enzyme catalyses (2S)-2-aminobutanoate + glyoxylate = 2-oxobutanoate + glycine. It carries out the reaction N(omega),N(omega)-dimethyl-L-arginine + oxaloacetate = 5-(3,3-dimethylguanidino)-2-oxopentanoate + L-aspartate. The catalysed reaction is oxaloacetate + L-alanine = L-aspartate + pyruvate. It catalyses the reaction N(omega),N(omega)-dimethyl-L-arginine + 2-oxobutanoate = 5-(3,3-dimethylguanidino)-2-oxopentanoate + (2S)-2-aminobutanoate. The enzyme catalyses 2-oxopentanoate + N(omega),N(omega)-dimethyl-L-arginine = 5-(3,3-dimethylguanidino)-2-oxopentanoate + L-2-aminopentanoate. It carries out the reaction 2-oxohexanoate + N(omega),N(omega)-dimethyl-L-arginine = L-2-aminohexanoate + 5-(3,3-dimethylguanidino)-2-oxopentanoate. Its activity is regulated as follows. (R)-3-amino-2-methylpropionate--pyruvate transaminase and beta-alanine-pyruvate aminotransferase are inhibited by aminooxyacetic acid. Its function is as follows. Multifunctional aminotransferase with a broad substrate specificity. Catalyzes the conversion of glyoxylate to glycine using alanine as the amino donor. Catalyzes metabolism of not L- but the D-isomer of D-beta-aminoisobutyric acid to generate 2-methyl-3-oxopropanoate and alanine. Catalyzes the transfer of the amino group from beta-alanine to pyruvate to yield L-alanine and 3-oxopropanoate. Can metabolize NG-monomethyl-L-arginine (NMMA), asymmetric NG,NG-dimethyl-L-arginine (ADMA) and symmetric NG,N'G-dimethyl-L-arginine (SDMA). ADMA is a potent inhibitor of nitric-oxide (NO) synthase, and this activity provides mechanism through which the kidney regulates blood pressure. The protein is Alanine--glyoxylate aminotransferase 2, mitochondrial (Agxt2) of Mus musculus (Mouse).